Here is a 604-residue protein sequence, read N- to C-terminus: Aspartate--tRNA(Asp/Asn) ligase (604 aa).

Glu-187 provides a ligand contact to L-aspartate. The interval 211–214 (QQFK) is aspartate. L-aspartate is bound by residues Arg-233 and His-461. An ATP-binding site is contributed by 233-235 (RDE). Residue Glu-495 coordinates ATP. Residue Arg-502 participates in L-aspartate binding. 547–550 (GLDR) is an ATP binding site.

Belongs to the class-II aminoacyl-tRNA synthetase family. Type 1 subfamily. In terms of assembly, homodimer.

The protein localises to the cytoplasm. It carries out the reaction tRNA(Asx) + L-aspartate + ATP = L-aspartyl-tRNA(Asx) + AMP + diphosphate. Its function is as follows. Aspartyl-tRNA synthetase with relaxed tRNA specificity since it is able to aspartylate not only its cognate tRNA(Asp) but also tRNA(Asn). Reaction proceeds in two steps: L-aspartate is first activated by ATP to form Asp-AMP and then transferred to the acceptor end of tRNA(Asp/Asn). The sequence is that of Aspartate--tRNA(Asp/Asn) ligase from Chlorobium luteolum (strain DSM 273 / BCRC 81028 / 2530) (Pelodictyon luteolum).